The primary structure comprises 214 residues: MTERPKIRVLLIDNHPLVLDGLKAVLETFDHIEVAGTAGLAQTGLEIGRQILPQVVLMDINMPKLSGIDAIELFRNELPQARVVMLSMHDSREYISSSVMHGAAGYILKDVSTDEIVSAIETVAGGGTYFSSGVFDALMGERVEEGSDPLTPRERDILGLIVAGRSNKEIAETLGITSATAETHRKNLKKKLGITTTAGLIRYALDHGIVSKVG.

One can recognise a Response regulatory domain in the interval 8-124 (RVLLIDNHPL…EIVSAIETVA (117 aa)). The residue at position 59 (Asp59) is a 4-aspartylphosphate. An HTH luxR-type domain is found at 143–208 (VEEGSDPLTP…GLIRYALDHG (66 aa)). The H-T-H motif DNA-binding region spans 167–186 (NKEIAETLGITSATAETHRK).

It localises to the cytoplasm. Its function is as follows. Member of the two-component regulatory system MctS/MctR, which activates mctP expression. In Rhizobium johnstonii (strain DSM 114642 / LMG 32736 / 3841) (Rhizobium leguminosarum bv. viciae), this protein is Transcriptional regulatory protein MctR.